The primary structure comprises 99 residues: Ferredoxin, heterocyst (99 aa).

The region spanning Tyr-4 to Pro-96 is the 2Fe-2S ferredoxin-type domain. [2Fe-2S] cluster is bound by residues Cys-42, Cys-47, Cys-50, and Cys-80.

The protein belongs to the 2Fe2S plant-type ferredoxin family. The cofactor is [2Fe-2S] cluster.

In terms of biological role, ferredoxins are iron-sulfur proteins that transfer electrons in a wide variety of metabolic reactions. The chain is Ferredoxin, heterocyst (fdxH) from Microchaete diplosiphon (Fremyella diplosiphon).